Consider the following 283-residue polypeptide: Diphthine methyl ester synthase (283 aa).

Residues leucine 9, aspartate 84, glycine 87, 112–113 (SI), leucine 163, methionine 221, and histidine 246 each bind S-adenosyl-L-methionine.

The protein belongs to the diphthine synthase family.

The protein localises to the cytoplasm. The catalysed reaction is 2-[(3S)-amino-3-carboxypropyl]-L-histidyl-[translation elongation factor 2] + 4 S-adenosyl-L-methionine = diphthine methyl ester-[translation elongation factor 2] + 4 S-adenosyl-L-homocysteine + 3 H(+). Its pathway is protein modification; peptidyl-diphthamide biosynthesis. In terms of biological role, S-adenosyl-L-methionine-dependent methyltransferase that catalyzes four methylations of the modified target histidine residue in translation elongation factor 2 (EF-2), to form an intermediate called diphthine methyl ester. The four successive methylation reactions represent the second step of diphthamide biosynthesis. The chain is Diphthine methyl ester synthase (dph5) from Schizosaccharomyces pombe (strain 972 / ATCC 24843) (Fission yeast).